A 2648-amino-acid polypeptide reads, in one-letter code: E3 ubiquitin-protein ligase hecd-1 (2648 aa).

ANK repeat units lie at residues 374–403 (VGQS…DVNK) and 405–434 (HKSS…NPDL). Residues 433 to 455 (DLRDEDGKTALDKARERSDDDHN) show a composition bias toward basic and acidic residues. Disordered stretches follow at residues 433–494 (DLRD…ELPN), 645–714 (PMEI…KATA), and 1376–1400 (DPPK…ALPP). 3 stretches are compositionally biased toward polar residues: residues 478-489 (ASTSKQPGTSTK), 652-661 (NQPSSSTAVP), and 670-688 (TVPS…NPST). 2 stretches are compositionally biased toward low complexity: residues 696–714 (SSTP…KATA) and 1383–1400 (PAGT…ALPP). In terms of domain architecture, MIB/HERC2 spans 1438–1510 (RSRGSYKISE…NFDIERVTST (73 aa)). Disordered regions lie at residues 1538–1562 (YTPK…GSSR), 1575–1629 (KNTT…SLQH), 1652–1796 (NQEP…LLGG), and 1811–1836 (ESLS…GKKP). Low complexity-rich tracts occupy residues 1543-1562 (TGGP…GSSR) and 1575-1586 (KNTTPAGTPSSG). The segment covering 1610 to 1629 (TSGPSVASTGQAASAESLQH) has biased composition (polar residues). Residues 1653–1666 (QEPEDEPMGGEESD) show a composition bias toward acidic residues. Over residues 1667–1696 (SAASMRSAASSNSQMSMGSSSQQQQQQDSD) the composition is skewed to low complexity. Composition is skewed to acidic residues over residues 1736-1746 (TDGDADADETN) and 1756-1783 (DAME…DESS). Over residues 1812 to 1823 (SLSDASSSAKDA) the composition is skewed to low complexity. The HECT domain occupies 2240 to 2648 (FHADRKAVLE…AINEKGFHLN (409 aa)). Catalysis depends on cysteine 2617, which acts as the Glycyl thioester intermediate.

It belongs to the UPL family. K-HECT subfamily. In terms of tissue distribution, expressed in most tissues, including hypodermis, muscle, intestine, vulva, and neurons.

It carries out the reaction S-ubiquitinyl-[E2 ubiquitin-conjugating enzyme]-L-cysteine + [acceptor protein]-L-lysine = [E2 ubiquitin-conjugating enzyme]-L-cysteine + N(6)-ubiquitinyl-[acceptor protein]-L-lysine.. It participates in protein modification; protein ubiquitination. In terms of biological role, E3 ubiquitin-protein ligase which accepts ubiquitin from an E2 ubiquitin-conjugating enzyme in the form of a thioester and then directly transfers the ubiquitin to targeted substrates. Involved in the ubiquitination and proteasomal-mediated degradation of cytoplasmic and mitochondrial proteins. Positively regulates lin-12 activity in the anchor cell (AC)/vulval precursor (VU) cell fate decision. Negatively regulates glp-1 activity in germline proliferation. May play a role in the formation of fibrous organelles, a hemidesmosome-like structure attaching muscles to the epidermis. Regulates germline DNA double-strand-break repair and apoptosis in response to DNA damage by recruiting E4 ubiquitin-protein ligase ufd-2 to DNA repair foci. The protein is E3 ubiquitin-protein ligase hecd-1 of Caenorhabditis elegans.